The sequence spans 143 residues: Aspartate 1-decarboxylase (143 aa).

S25 functions as the Schiff-base intermediate with substrate; via pyruvic acid in the catalytic mechanism. Position 25 is a pyruvic acid (Ser) (S25). Residue T57 coordinates substrate. The active-site Proton donor is the Y58. 73-75 lines the substrate pocket; it reads GAA.

The protein belongs to the PanD family. Heterooctamer of four alpha and four beta subunits. The cofactor is pyruvate. Is synthesized initially as an inactive proenzyme, which is activated by self-cleavage at a specific serine bond to produce a beta-subunit with a hydroxyl group at its C-terminus and an alpha-subunit with a pyruvoyl group at its N-terminus.

Its subcellular location is the cytoplasm. It carries out the reaction L-aspartate + H(+) = beta-alanine + CO2. Its pathway is cofactor biosynthesis; (R)-pantothenate biosynthesis; beta-alanine from L-aspartate: step 1/1. Functionally, catalyzes the pyruvoyl-dependent decarboxylation of aspartate to produce beta-alanine. In Mycobacterium ulcerans (strain Agy99), this protein is Aspartate 1-decarboxylase.